Consider the following 286-residue polypeptide: Deleted in azoospermia-like (286 aa).

The RRM domain maps to 30–105 (NTVFVGGIDI…KKLKLGPAIR (76 aa)). The DAZ domain occupies 155-180 (ACPYPSSPPMAIQQIPVGCQQPSYFQ).

It belongs to the RRM DAZ family. As to quaternary structure, interacts with the C-terminus of pabp1 and with epabp. Prior to oocyte maturation, found in a complex with epabp and pum2 proteins and spdy1 mRNA; pum2 dissociates from the complex during maturation. Germ-line specific; expressed in adult testis and ovary. Localized specifically to the oocyte and embryonic germ plasm and to migrating primordial germ cells (PGCs).

It localises to the cytoplasm. Functionally, RNA-binding protein that is required for primordial germ cell (PGC) differentiation and indirectly necessary for the migration of PGCs through the endoderm. May promote meiotic cell division during spermatogenesis. Shows a preference for G- and U-rich RNAs and probably binds the 3'-UTR of target mRNAs. Stimulates the initiation of translation of mRNAs through the recruitment of poly(A)-binding proteins (PABPs). This chain is Deleted in azoospermia-like, found in Xenopus tropicalis (Western clawed frog).